We begin with the raw amino-acid sequence, 491 residues long: UDP-N-acetylmuramate--L-alanine ligase (491 aa).

G126–T132 lines the ATP pocket.

The protein belongs to the MurCDEF family.

The protein localises to the cytoplasm. It catalyses the reaction UDP-N-acetyl-alpha-D-muramate + L-alanine + ATP = UDP-N-acetyl-alpha-D-muramoyl-L-alanine + ADP + phosphate + H(+). It functions in the pathway cell wall biogenesis; peptidoglycan biosynthesis. Functionally, cell wall formation. In Shigella boydii serotype 18 (strain CDC 3083-94 / BS512), this protein is UDP-N-acetylmuramate--L-alanine ligase.